A 212-amino-acid chain; its full sequence is Ribosomal RNA large subunit methyltransferase E (212 aa).

The tract at residues 1–26 is disordered; that stretch reads MPAERPSVSQKPKNPYKRPDAFTKAA. S-adenosyl-L-methionine contacts are provided by Gly-63, Trp-65, Asp-83, Asp-101, and Asp-122. Catalysis depends on Lys-162, which acts as the Proton acceptor.

It belongs to the class I-like SAM-binding methyltransferase superfamily. RNA methyltransferase RlmE family.

It localises to the cytoplasm. It catalyses the reaction uridine(2552) in 23S rRNA + S-adenosyl-L-methionine = 2'-O-methyluridine(2552) in 23S rRNA + S-adenosyl-L-homocysteine + H(+). Functionally, specifically methylates the uridine in position 2552 of 23S rRNA at the 2'-O position of the ribose in the fully assembled 50S ribosomal subunit. This is Ribosomal RNA large subunit methyltransferase E from Sorangium cellulosum (strain So ce56) (Polyangium cellulosum (strain So ce56)).